The chain runs to 256 residues: Thiazole synthase (256 aa).

The Schiff-base intermediate with DXP role is filled by Lys-91. Residues Gly-152, 179 to 180 (AG), and 201 to 202 (NT) each bind 1-deoxy-D-xylulose 5-phosphate.

This sequence belongs to the ThiG family. As to quaternary structure, homotetramer. Forms heterodimers with either ThiH or ThiS.

It is found in the cytoplasm. It carries out the reaction [ThiS sulfur-carrier protein]-C-terminal-Gly-aminoethanethioate + 2-iminoacetate + 1-deoxy-D-xylulose 5-phosphate = [ThiS sulfur-carrier protein]-C-terminal Gly-Gly + 2-[(2R,5Z)-2-carboxy-4-methylthiazol-5(2H)-ylidene]ethyl phosphate + 2 H2O + H(+). It functions in the pathway cofactor biosynthesis; thiamine diphosphate biosynthesis. Its function is as follows. Catalyzes the rearrangement of 1-deoxy-D-xylulose 5-phosphate (DXP) to produce the thiazole phosphate moiety of thiamine. Sulfur is provided by the thiocarboxylate moiety of the carrier protein ThiS. In vitro, sulfur can be provided by H(2)S. This chain is Thiazole synthase, found in Erwinia tasmaniensis (strain DSM 17950 / CFBP 7177 / CIP 109463 / NCPPB 4357 / Et1/99).